We begin with the raw amino-acid sequence, 885 residues long: Lon protease homolog 2, peroxisomal (885 aa).

The Lon N-terminal domain occupies 12–256 (LAVLPFRNKV…KATELVDRHL (245 aa)). Positions 70-104 (LLSPGVGSDSGEGGSKVGGSAVESSKQDTKNGKEP) are disordered. Over residues 77-86 (SDSGEGGSKV) the composition is skewed to gly residues. Residues 94-104 (SKQDTKNGKEP) are compositionally biased toward basic and acidic residues. 409-416 (GPPGVGKT) serves as a coordination point for ATP. In terms of domain architecture, Lon proteolytic spans 690-875 (VASPGVSVGL…EEVLDHAFEG (186 aa)). Catalysis depends on residues serine 781 and lysine 824. The Microbody targeting signal motif lies at 883–885 (SKL).

This sequence belongs to the peptidase S16 family.

Its subcellular location is the peroxisome matrix. It carries out the reaction Hydrolysis of proteins in presence of ATP.. In terms of biological role, ATP-dependent serine protease that mediates the selective degradation of misfolded and unassembled polypeptides in the peroxisomal matrix. Necessary for type 2 peroxisome targeting signal (PTS2)-containing protein processing and facilitates peroxisome matrix protein import. In Zea mays (Maize), this protein is Lon protease homolog 2, peroxisomal (LON1).